We begin with the raw amino-acid sequence, 187 residues long: UPF0301 protein YPO0936/y3322/YP_3506 (187 aa).

The protein belongs to the UPF0301 (AlgH) family.

This chain is UPF0301 protein YPO0936/y3322/YP_3506, found in Yersinia pestis.